The primary structure comprises 234 residues: Segregation and condensation protein A (234 aa).

Belongs to the ScpA family. In terms of assembly, component of a cohesin-like complex composed of ScpA, ScpB and the Smc homodimer, in which ScpA and ScpB bind to the head domain of Smc. The presence of the three proteins is required for the association of the complex with DNA.

It localises to the cytoplasm. In terms of biological role, participates in chromosomal partition during cell division. May act via the formation of a condensin-like complex containing Smc and ScpB that pull DNA away from mid-cell into both cell halves. The protein is Segregation and condensation protein A of Streptococcus pyogenes serotype M12 (strain MGAS2096).